A 336-amino-acid chain; its full sequence is 3-isopropylmalate dehydrogenase (336 aa).

Substrate contacts are provided by R87, R97, R121, and D211. Mg(2+) contacts are provided by D211, D235, and D239. Residue 271–283 (GSAPDIAGQGIAD) participates in NAD(+) binding.

Belongs to the isocitrate and isopropylmalate dehydrogenases family. LeuB type 2 subfamily. In terms of assembly, homodimer. Mg(2+) serves as cofactor. Mn(2+) is required as a cofactor.

Its subcellular location is the cytoplasm. It catalyses the reaction (2R,3S)-3-isopropylmalate + NAD(+) = 4-methyl-2-oxopentanoate + CO2 + NADH. It functions in the pathway amino-acid biosynthesis; L-leucine biosynthesis; L-leucine from 3-methyl-2-oxobutanoate: step 3/4. Functionally, catalyzes the oxidation of 3-carboxy-2-hydroxy-4-methylpentanoate (3-isopropylmalate) to 3-carboxy-4-methyl-2-oxopentanoate. The product decarboxylates to 4-methyl-2 oxopentanoate. The protein is 3-isopropylmalate dehydrogenase of Mycobacterium bovis (strain ATCC BAA-935 / AF2122/97).